Here is a 311-residue protein sequence, read N- to C-terminus: Mycothiol acetyltransferase (311 aa).

E35 is a 1D-myo-inositol 2-(L-cysteinylamino)-2-deoxy-alpha-D-glucopyranoside binding site. 79–81 provides a ligand contact to acetyl-CoA; sequence LVV. The N-acetyltransferase domain occupies 155-311; sequence VRTYVGTVDD…TAYALARIDD (157 aa). 3 residues coordinate 1D-myo-inositol 2-(L-cysteinylamino)-2-deoxy-alpha-D-glucopyranoside: E180, K225, and E235. Residues 239 to 241 and 246 to 252 contribute to the acetyl-CoA site; these read LGV and QGRGLGQ. Y278 is a 1D-myo-inositol 2-(L-cysteinylamino)-2-deoxy-alpha-D-glucopyranoside binding site. 283–288 is a binding site for acetyl-CoA; it reads NVAAAR.

It belongs to the acetyltransferase family. MshD subfamily. In terms of assembly, monomer.

It catalyses the reaction 1D-myo-inositol 2-(L-cysteinylamino)-2-deoxy-alpha-D-glucopyranoside + acetyl-CoA = mycothiol + CoA + H(+). Functionally, catalyzes the transfer of acetyl from acetyl-CoA to desacetylmycothiol (Cys-GlcN-Ins) to form mycothiol. This Mycobacterium leprae (strain Br4923) protein is Mycothiol acetyltransferase.